A 72-amino-acid polypeptide reads, in one-letter code: Translation initiation factor IF-1 (72 aa).

The 72-residue stretch at 1 to 72 (MAKEEVLEFP…TKGRITYRFK (72 aa)) folds into the S1-like domain.

The protein belongs to the IF-1 family. As to quaternary structure, component of the 30S ribosomal translation pre-initiation complex which assembles on the 30S ribosome in the order IF-2 and IF-3, IF-1 and N-formylmethionyl-tRNA(fMet); mRNA recruitment can occur at any time during PIC assembly.

The protein resides in the cytoplasm. Functionally, one of the essential components for the initiation of protein synthesis. Stabilizes the binding of IF-2 and IF-3 on the 30S subunit to which N-formylmethionyl-tRNA(fMet) subsequently binds. Helps modulate mRNA selection, yielding the 30S pre-initiation complex (PIC). Upon addition of the 50S ribosomal subunit IF-1, IF-2 and IF-3 are released leaving the mature 70S translation initiation complex. The protein is Translation initiation factor IF-1 of Brucella abortus (strain 2308).